The chain runs to 346 residues: Uroporphyrinogen decarboxylase (346 aa).

Substrate-binding positions include 23-27 (RQAGR), D72, Y155, S209, and H322.

It belongs to the uroporphyrinogen decarboxylase family. Homodimer.

It localises to the cytoplasm. The enzyme catalyses uroporphyrinogen III + 4 H(+) = coproporphyrinogen III + 4 CO2. It functions in the pathway porphyrin-containing compound metabolism; protoporphyrin-IX biosynthesis; coproporphyrinogen-III from 5-aminolevulinate: step 4/4. Catalyzes the decarboxylation of four acetate groups of uroporphyrinogen-III to yield coproporphyrinogen-III. The polypeptide is Uroporphyrinogen decarboxylase (Anaeromyxobacter dehalogenans (strain 2CP-C)).